The sequence spans 626 residues: Leucine aminopeptidase 2-1 (626 aa).

Substrate-binding positions include 134 to 136 and 259 to 264; these read QCQ and PYGGME. Residue histidine 288 coordinates Zn(2+). Glutamate 289 (proton acceptor) is an active-site residue. Histidine 292 and glutamate 311 together coordinate Zn(2+). The active-site Proton donor is tyrosine 389.

This sequence belongs to the peptidase M1 family. The cofactor is Zn(2+).

Its subcellular location is the cytoplasm. The protein localises to the nucleus. It carries out the reaction an epoxide + H2O = an ethanediol. Functionally, aminopeptidase that preferentially cleaves di- and tripeptides. Also has low epoxide hydrolase activity (in vitro). Can hydrolyze the epoxide leukotriene LTA(4) but it forms preferentially 5,6-dihydroxy-7,9,11,14-eicosatetraenoic acid rather than the cytokine leukotriene B(4) as the product compared to the homologous mammalian enzyme (in vitro). The chain is Leucine aminopeptidase 2-1 (LKA4) from Scheffersomyces stipitis (strain ATCC 58785 / CBS 6054 / NBRC 10063 / NRRL Y-11545) (Yeast).